An 84-amino-acid polypeptide reads, in one-letter code: Extender of the chronological lifespan protein 2 (84 aa).

It belongs to the ecl1 family.

It is found in the nucleus. Functionally, involved in chronological cell aging. This is Extender of the chronological lifespan protein 2 (ecl2) from Schizosaccharomyces pombe (strain 972 / ATCC 24843) (Fission yeast).